The sequence spans 192 residues: Fe/S biogenesis protein NfuA (192 aa).

2 residues coordinate [4Fe-4S] cluster: cysteine 149 and cysteine 152.

Belongs to the NfuA family. In terms of assembly, homodimer. [4Fe-4S] cluster serves as cofactor.

Involved in iron-sulfur cluster biogenesis. Binds a 4Fe-4S cluster, can transfer this cluster to apoproteins, and thereby intervenes in the maturation of Fe/S proteins. Could also act as a scaffold/chaperone for damaged Fe/S proteins. The protein is Fe/S biogenesis protein NfuA of Shewanella sediminis (strain HAW-EB3).